The following is a 341-amino-acid chain: tRNA N6-adenosine threonylcarbamoyltransferase (341 aa).

Fe cation is bound by residues H111 and H115. Residues 134–138 (LVSGG), D167, G180, and N272 contribute to the substrate site. Residue D300 coordinates Fe cation.

The protein belongs to the KAE1 / TsaD family. Fe(2+) is required as a cofactor.

It localises to the cytoplasm. It catalyses the reaction L-threonylcarbamoyladenylate + adenosine(37) in tRNA = N(6)-L-threonylcarbamoyladenosine(37) in tRNA + AMP + H(+). In terms of biological role, required for the formation of a threonylcarbamoyl group on adenosine at position 37 (t(6)A37) in tRNAs that read codons beginning with adenine. Is involved in the transfer of the threonylcarbamoyl moiety of threonylcarbamoyl-AMP (TC-AMP) to the N6 group of A37, together with TsaE and TsaB. TsaD likely plays a direct catalytic role in this reaction. The sequence is that of tRNA N6-adenosine threonylcarbamoyltransferase from Psychromonas ingrahamii (strain DSM 17664 / CCUG 51855 / 37).